The sequence spans 356 residues: Phosphate acyltransferase (356 aa).

This sequence belongs to the PlsX family. Homodimer. Probably interacts with PlsY.

The protein localises to the cytoplasm. It carries out the reaction a fatty acyl-[ACP] + phosphate = an acyl phosphate + holo-[ACP]. It functions in the pathway lipid metabolism; phospholipid metabolism. Functionally, catalyzes the reversible formation of acyl-phosphate (acyl-PO(4)) from acyl-[acyl-carrier-protein] (acyl-ACP). This enzyme utilizes acyl-ACP as fatty acyl donor, but not acyl-CoA. This Shigella boydii serotype 4 (strain Sb227) protein is Phosphate acyltransferase.